Consider the following 154-residue polypeptide: UPF0178 protein H16_B0290 (154 aa).

Belongs to the UPF0178 family.

The sequence is that of UPF0178 protein H16_B0290 from Cupriavidus necator (strain ATCC 17699 / DSM 428 / KCTC 22496 / NCIMB 10442 / H16 / Stanier 337) (Ralstonia eutropha).